Here is a 245-residue protein sequence, read N- to C-terminus: Oncostatin-M (245 aa).

The signal sequence occupies residues 1–26; it reads MGAQRMQRTLLSLVLRLLLLCTVATG. Disulfide bonds link C28–C135 and C71–C177. A glycan (N-linked (GlcNAc...) asparagine) is linked at N97. Disordered regions lie at residues 143–171 and 197–245; these read SSDP…STFQ and WGER…APAR. Pro residues predominate over residues 153-166; the sequence is QPGPGPTPLPPTPP. Residues 203–218 show a composition bias toward basic residues; that stretch reads RSRRHSPCRALKRGAR. Residues 207-245 constitute a propeptide that is removed on maturation; it reads HSPCRALKRGARRTQPFPEIRRLAPRGQPPGSLWGAPAR.

This sequence belongs to the LIF/OSM family. Post-translationally, propeptide processing is not important for receptor binding activity but may be important growth-inhibitory activity.

The protein localises to the secreted. Growth regulator. Inhibits the proliferation of a number of tumor cell lines. It regulates cytokine production, including IL-6, G-CSF and GM-CSF from endothelial cells. Uses both type I OSM receptor (heterodimers composed of LIFR and IL6ST) and type II OSM receptor (heterodimers composed of OSMR and IL6ST). Involved in the maturation of fetal hepatocytes, thereby promoting liver development and regeneration. This chain is Oncostatin-M (OSM), found in Bos taurus (Bovine).